The following is a 213-amino-acid chain: Orotate phosphoribosyltransferase (213 aa).

Lys26 is a 5-phospho-alpha-D-ribose 1-diphosphate binding site. Residue 34-35 (FF) participates in orotate binding. Residues 72–73 (YK), Arg99, Lys100, Lys103, His105, and 124–132 (DDVITAGTA) each bind 5-phospho-alpha-D-ribose 1-diphosphate. Orotate is bound by residues Thr128 and Arg156.

It belongs to the purine/pyrimidine phosphoribosyltransferase family. PyrE subfamily. In terms of assembly, homodimer. Mg(2+) serves as cofactor.

It catalyses the reaction orotidine 5'-phosphate + diphosphate = orotate + 5-phospho-alpha-D-ribose 1-diphosphate. The protein operates within pyrimidine metabolism; UMP biosynthesis via de novo pathway; UMP from orotate: step 1/2. Its function is as follows. Catalyzes the transfer of a ribosyl phosphate group from 5-phosphoribose 1-diphosphate to orotate, leading to the formation of orotidine monophosphate (OMP). This is Orotate phosphoribosyltransferase from Haemophilus ducreyi (strain 35000HP / ATCC 700724).